Here is a 347-residue protein sequence, read N- to C-terminus: Phosphoribosylformylglycinamidine cyclo-ligase (347 aa).

Belongs to the AIR synthase family.

It is found in the cytoplasm. It catalyses the reaction 2-formamido-N(1)-(5-O-phospho-beta-D-ribosyl)acetamidine + ATP = 5-amino-1-(5-phospho-beta-D-ribosyl)imidazole + ADP + phosphate + H(+). The protein operates within purine metabolism; IMP biosynthesis via de novo pathway; 5-amino-1-(5-phospho-D-ribosyl)imidazole from N(2)-formyl-N(1)-(5-phospho-D-ribosyl)glycinamide: step 2/2. In Yersinia pestis, this protein is Phosphoribosylformylglycinamidine cyclo-ligase.